Consider the following 92-residue polypeptide: Small ribosomal subunit protein uS19c (92 aa).

This sequence belongs to the universal ribosomal protein uS19 family.

Its subcellular location is the plastid. It is found in the chloroplast. Its function is as follows. Protein S19 forms a complex with S13 that binds strongly to the 16S ribosomal RNA. In Chloranthus spicatus (Chulantree), this protein is Small ribosomal subunit protein uS19c.